The sequence spans 506 residues: Maturase K (506 aa).

Belongs to the intron maturase 2 family. MatK subfamily.

The protein localises to the plastid. It localises to the chloroplast. Functionally, usually encoded in the trnK tRNA gene intron. Probably assists in splicing its own and other chloroplast group II introns. The protein is Maturase K of Carica papaya (Papaya).